Reading from the N-terminus, the 838-residue chain is Probable beta-glucosidase K (838 aa).

Asn19 carries N-linked (GlcNAc...) asparagine glycosylation. Residue Asp232 is part of the active site. Residues Asn324 and Asn489 are each glycosylated (N-linked (GlcNAc...) asparagine). In terms of domain architecture, PA14 spans 405 to 564; sequence EGQPGLRMRF…DPELAIARAV (160 aa).

It belongs to the glycosyl hydrolase 3 family.

The protein resides in the secreted. It catalyses the reaction Hydrolysis of terminal, non-reducing beta-D-glucosyl residues with release of beta-D-glucose.. It functions in the pathway glycan metabolism; cellulose degradation. Its function is as follows. Beta-glucosidases are one of a number of cellulolytic enzymes involved in the degradation of cellulosic biomass. Catalyzes the last step releasing glucose from the inhibitory cellobiose. The sequence is that of Probable beta-glucosidase K (bglK) from Emericella nidulans (strain FGSC A4 / ATCC 38163 / CBS 112.46 / NRRL 194 / M139) (Aspergillus nidulans).